Here is a 179-residue protein sequence, read N- to C-terminus: QPLVDLEGNLVENGGTYYLLPHIWALGGGIEAARTGKETCPLTVVQSPFEVSNGEPIRIASQFLSTFIPDGSPYAIGFANPPSCAASPWWTVVETSEGLAVKLLEHKTPEEDDTKFKFQKVSSPNRYVYNLSYCQREDDDLKCDQYIGIRRDAKGYRRLVVTNDNPLELVLVKANSPSQ.

Q1 carries the post-translational modification Pyrrolidone carboxylic acid. Intrachain disulfides connect C40/C84 and C134/C143.

Belongs to the protease inhibitor I3 (leguminous Kunitz-type inhibitor) family.

Inhibition of chymotrypsin. The sequence is that of Chymotrypsin inhibitor ECI from Erythrina variegata (Indian coral tree).